A 426-amino-acid polypeptide reads, in one-letter code: Serine--tRNA ligase (426 aa).

Position 233–235 (233–235 (TAE)) interacts with L-serine. 264 to 266 (RSE) is an ATP binding site. Residue glutamate 287 participates in L-serine binding. 351–354 (EISS) is a binding site for ATP. Serine 387 lines the L-serine pocket.

Belongs to the class-II aminoacyl-tRNA synthetase family. Type-1 seryl-tRNA synthetase subfamily. As to quaternary structure, homodimer. The tRNA molecule binds across the dimer.

It is found in the cytoplasm. It carries out the reaction tRNA(Ser) + L-serine + ATP = L-seryl-tRNA(Ser) + AMP + diphosphate + H(+). The catalysed reaction is tRNA(Sec) + L-serine + ATP = L-seryl-tRNA(Sec) + AMP + diphosphate + H(+). Its pathway is aminoacyl-tRNA biosynthesis; selenocysteinyl-tRNA(Sec) biosynthesis; L-seryl-tRNA(Sec) from L-serine and tRNA(Sec): step 1/1. In terms of biological role, catalyzes the attachment of serine to tRNA(Ser). Is also able to aminoacylate tRNA(Sec) with serine, to form the misacylated tRNA L-seryl-tRNA(Sec), which will be further converted into selenocysteinyl-tRNA(Sec). This Ectopseudomonas mendocina (strain ymp) (Pseudomonas mendocina) protein is Serine--tRNA ligase.